The chain runs to 404 residues: Serine/threonine transporter SstT (404 aa).

The next 9 helical transmembrane spans lie at I17–I37, F44–I64, M75–I95, A138–L158, I179–V199, L212–L232, I287–L307, F319–V339, and F354–I374.

Belongs to the dicarboxylate/amino acid:cation symporter (DAACS) (TC 2.A.23) family.

It localises to the cell membrane. It catalyses the reaction L-serine(in) + Na(+)(in) = L-serine(out) + Na(+)(out). The catalysed reaction is L-threonine(in) + Na(+)(in) = L-threonine(out) + Na(+)(out). Functionally, involved in the import of serine and threonine into the cell, with the concomitant import of sodium (symport system). The polypeptide is Serine/threonine transporter SstT (Streptococcus equi subsp. zooepidemicus (strain H70)).